Reading from the N-terminus, the 226-residue chain is Ribonuclease T (226 aa).

One can recognise an Exonuclease domain in the interval 20-194 (VVIDVETAGF…YDTERTAELF (175 aa)). Mg(2+) contacts are provided by Asp23, Glu25, His181, and Asp186. His181 (proton donor/acceptor) is an active-site residue.

This sequence belongs to the RNase T family. As to quaternary structure, homodimer. It depends on Mg(2+) as a cofactor.

In terms of biological role, trims short 3' overhangs of a variety of RNA species, leaving a one or two nucleotide 3' overhang. Responsible for the end-turnover of tRNA: specifically removes the terminal AMP residue from uncharged tRNA (tRNA-C-C-A). Also appears to be involved in tRNA biosynthesis. The polypeptide is Ribonuclease T (Shewanella denitrificans (strain OS217 / ATCC BAA-1090 / DSM 15013)).